The chain runs to 921 residues: Protein translocase subunit SecA (921 aa).

ATP is bound by residues glutamine 86, 104–108, and aspartate 512; that span reads GEGKT. Zn(2+) is bound by residues cysteine 905, cysteine 907, cysteine 916, and histidine 917.

It belongs to the SecA family. As to quaternary structure, monomer and homodimer. Part of the essential Sec protein translocation apparatus which comprises SecA, SecYEG and auxiliary proteins SecDF-YajC and YidC. Zn(2+) is required as a cofactor.

It localises to the cell inner membrane. Its subcellular location is the cytoplasm. It catalyses the reaction ATP + H2O + cellular proteinSide 1 = ADP + phosphate + cellular proteinSide 2.. In terms of biological role, part of the Sec protein translocase complex. Interacts with the SecYEG preprotein conducting channel. Has a central role in coupling the hydrolysis of ATP to the transfer of proteins into and across the cell membrane, serving both as a receptor for the preprotein-SecB complex and as an ATP-driven molecular motor driving the stepwise translocation of polypeptide chains across the membrane. This chain is Protein translocase subunit SecA, found in Caulobacter sp. (strain K31).